The chain runs to 249 residues: Putative TrmH family tRNA/rRNA methyltransferase YacO (249 aa).

3 residues coordinate S-adenosyl-L-methionine: Gly-198, Leu-218, and Leu-227.

Belongs to the class IV-like SAM-binding methyltransferase superfamily. RNA methyltransferase TrmH family.

This is Putative TrmH family tRNA/rRNA methyltransferase YacO (yacO) from Bacillus subtilis (strain 168).